A 392-amino-acid chain; its full sequence is uncharacterized protein (392 aa).

The protein belongs to the chlamydial CPn_0675/CT_696/TC_0068 family.

This is an uncharacterized protein from Chlamydia trachomatis serovar D (strain ATCC VR-885 / DSM 19411 / UW-3/Cx).